The following is a 659-amino-acid chain: Nitrate import ATP-binding protein NrtC (659 aa).

Residues 5–239 form the ABC transporter domain; the sequence is LAVDHVHQVF…RPRQRLEMME (235 aa). ATP is bound at residue 42-49; the sequence is GHSGCGKS. Residues 255–278 form a linker region; sequence QQQRRAKRRAKAAAPAPAVAASQQ. Residues 279–659 form a nrtA-like region; sequence KTVRLGFLPG…VAPIPLATSA (381 aa).

The protein belongs to the ABC transporter superfamily. Nitrate/nitrite/cyanate uptake transporter (NitT) (TC 3.A.1.16) family. In terms of assembly, the complex is composed of two ATP-binding proteins (NrtC and NrtD), two transmembrane proteins (NrtB) and a solute-binding protein (NrtA).

The protein localises to the cell inner membrane. It carries out the reaction nitrate(out) + ATP + H2O = nitrate(in) + ADP + phosphate + H(+). Its activity is regulated as follows. Transport is inhibited by ammonium. The C-terminal domain of NrtC is involved in the ammonium-promoted inhibition of the nitrate/nitrite transporter. Its function is as follows. Part of the ABC transporter complex NrtABCD involved in nitrate uptake. The complex is probably also involved in nitrite transport. Probably responsible for energy coupling to the transport system. In Synechococcus elongatus (strain ATCC 33912 / PCC 7942 / FACHB-805) (Anacystis nidulans R2), this protein is Nitrate import ATP-binding protein NrtC.